Consider the following 363-residue polypeptide: Fructose-bisphosphate aldolase A (363 aa).

Arginine 43 contributes to the beta-D-fructose 1,6-bisphosphate binding site. Catalysis depends on glutamate 188, which acts as the Proton acceptor. Residue lysine 230 is the Schiff-base intermediate with dihydroxyacetone-P of the active site. Beta-D-fructose 1,6-bisphosphate-binding positions include 272–274, serine 301, and arginine 304; that span reads SGG.

The protein belongs to the class I fructose-bisphosphate aldolase family. As to quaternary structure, tetramer.

The catalysed reaction is beta-D-fructose 1,6-bisphosphate = D-glyceraldehyde 3-phosphate + dihydroxyacetone phosphate. It participates in carbohydrate degradation; glycolysis; D-glyceraldehyde 3-phosphate and glycerone phosphate from D-glucose: step 4/4. Plays a key role in glycolysis and gluconeogenesis. This is Fructose-bisphosphate aldolase A from Salmo salar (Atlantic salmon).